The primary structure comprises 280 residues: Octanoyl-[GcvH]:protein N-octanoyltransferase (280 aa).

The region spanning 40–245 is the BPL/LPL catalytic domain; the sequence is QERGAVLRAW…VLSTVSLLQN (206 aa). Catalysis depends on Cys-144, which acts as the Acyl-thioester intermediate.

The protein belongs to the octanoyltransferase LipL family.

It carries out the reaction N(6)-octanoyl-L-lysyl-[glycine-cleavage complex H protein] + L-lysyl-[lipoyl-carrier protein] = N(6)-octanoyl-L-lysyl-[lipoyl-carrier protein] + L-lysyl-[glycine-cleavage complex H protein]. Its pathway is protein modification; protein lipoylation via endogenous pathway; protein N(6)-(lipoyl)lysine from octanoyl-[acyl-carrier-protein]. Its function is as follows. Catalyzes the amidotransfer (transamidation) of the octanoyl moiety from octanoyl-GcvH to the lipoyl domain of the E2 subunit of lipoate-dependent enzymes. The polypeptide is Octanoyl-[GcvH]:protein N-octanoyltransferase (Exiguobacterium sp. (strain ATCC BAA-1283 / AT1b)).